Consider the following 300-residue polypeptide: CDP-diacylglycerol--serine O-phosphatidyltransferase (300 aa).

The next 6 membrane-spanning stretches (helical) occupy residues A10–T30, I74–T94, M95–L115, E135–L155, G162–I182, and L207–L227.

The protein belongs to the CDP-alcohol phosphatidyltransferase class-I family.

It is found in the cell membrane. The enzyme catalyses a CDP-1,2-diacyl-sn-glycerol + L-serine = a 1,2-diacyl-sn-glycero-3-phospho-L-serine + CMP + H(+). This Mycobacterium leprae (strain TN) protein is CDP-diacylglycerol--serine O-phosphatidyltransferase (pssA).